The chain runs to 343 residues: Homeobox-leucine zipper protein HOX16 (343 aa).

A DNA-binding region (homeobox) is located at residues 74–133; that stretch reads LPEKKRRLTPEQVHLLERSFEEENKLEPERKTELARKLGLQPRQVAVWFQNRRARWKTKQ. A leucine-zipper region spans residues 132-176; it reads KQLERDFDRLKASFDALRADHDALLQDNHRLHSQVMSLTEKLQEK. Residues 218 to 239 are disordered; the sequence is FEEQQEQQVKAEDRLSTGSGGS.

It belongs to the HD-ZIP homeobox family. Class I subfamily. Expressed in seedlings, stems, leaf sheaths and blades and panicles.

It is found in the nucleus. Functionally, probable transcription factor. The protein is Homeobox-leucine zipper protein HOX16 (HOX16) of Oryza sativa subsp. japonica (Rice).